The sequence spans 365 residues: Phospho-N-acetylmuramoyl-pentapeptide-transferase (365 aa).

A run of 10 helical transmembrane segments spans residues 22–42 (YISVRIIMISITSLLITLALG), 74–94 (TMGGVLILSSVIISCLLWGDL), 95–115 (TSIYLWILILVVIFFGAIGFF), 133–153 (YKFALQSIFSIVLAIVLFYLL), 168–188 (SLYIPIGIVIFVVLAFFIING), 201–221 (GLAIVPVVLVAAGLGIYAYIE), 240–260 (LAEVAVFCAAVCGSGLAFLWF), 267–287 (VFMGDVGSLTLGAVLGVIAVM), 292–312 (LIFFIMGLLFVVEALSVMLQV), and 342–362 (KVVIRFWIISLILFLIGLAAI).

This sequence belongs to the glycosyltransferase 4 family. MraY subfamily. Mg(2+) serves as cofactor.

The protein localises to the cell inner membrane. The catalysed reaction is UDP-N-acetyl-alpha-D-muramoyl-L-alanyl-gamma-D-glutamyl-meso-2,6-diaminopimeloyl-D-alanyl-D-alanine + di-trans,octa-cis-undecaprenyl phosphate = di-trans,octa-cis-undecaprenyl diphospho-N-acetyl-alpha-D-muramoyl-L-alanyl-D-glutamyl-meso-2,6-diaminopimeloyl-D-alanyl-D-alanine + UMP. Its pathway is cell wall biogenesis; peptidoglycan biosynthesis. In terms of biological role, catalyzes the initial step of the lipid cycle reactions in the biosynthesis of the cell wall peptidoglycan: transfers peptidoglycan precursor phospho-MurNAc-pentapeptide from UDP-MurNAc-pentapeptide onto the lipid carrier undecaprenyl phosphate, yielding undecaprenyl-pyrophosphoryl-MurNAc-pentapeptide, known as lipid I. The protein is Phospho-N-acetylmuramoyl-pentapeptide-transferase of Francisella tularensis subsp. tularensis (strain FSC 198).